A 106-amino-acid polypeptide reads, in one-letter code: uncharacterized protein (106 aa).

The next 3 membrane-spanning stretches (helical) occupy residues 5–27, 42–64, and 76–98; these read IFVI…GIII, AVAA…LAYM, and LPYI…TNFF.

The protein resides in the cell membrane. This is an uncharacterized protein from Archaeoglobus fulgidus (strain ATCC 49558 / DSM 4304 / JCM 9628 / NBRC 100126 / VC-16).